Reading from the N-terminus, the 359-residue chain is Stearoyl-CoA desaturase (359 aa).

The Cytoplasmic segment spans residues 1-72 (MPAHLLQEEI…EGPKPKLEYV (72 aa)). Residues 73 to 93 (WRNIILMGLLHLGALYGITLI) form a helical membrane-spanning segment. Asn-75 lines the substrate pocket. Over 94–97 (PTCK) the chain is Lumenal. Residues 98 to 118 (IYTFLWVLFYYMMSALGITAG) form a helical membrane-spanning segment. At 119–217 (VHRLWSHRTY…EKLVMFQRRY (99 aa)) the chain is on the cytoplasmic side. His-120 and His-125 together coordinate Fe cation. Positions 120-125 (HRLWSH) match the Histidine box-1 motif. Substrate-binding residues include Asn-148, Arg-155, and Asp-156. Positions 157, 160, and 161 each coordinate Fe cation. The short motif at 157–161 (HRAHH) is the Histidine box-2 element. 2 residues coordinate substrate: Arg-188 and Lys-189. Position 203 is a phosphoserine (Ser-203). Residues 218–237 (YKPGVLLLCFILPTLVPWYL) traverse the membrane as a helical segment. The Lumenal segment spans residues 238–241 (WGET). Residues 242–263 (FQNSLFFATLLRYAVVLNATWL) form a helical membrane-spanning segment. Position 262 (Trp-262) interacts with substrate. Residues 264-359 (VNSAAHMYGY…RTGEESCKSG (96 aa)) lie on the Cytoplasmic side of the membrane. Fe cation is bound by residues His-269, His-298, His-301, and His-302. Positions 298 to 302 (HNYHH) match the Histidine box-3 motif.

Belongs to the fatty acid desaturase type 1 family. The cofactor is Fe(2+).

It localises to the endoplasmic reticulum membrane. The enzyme catalyses octadecanoyl-CoA + 2 Fe(II)-[cytochrome b5] + O2 + 2 H(+) = (9Z)-octadecenoyl-CoA + 2 Fe(III)-[cytochrome b5] + 2 H2O. The catalysed reaction is hexadecanoyl-CoA + 2 Fe(II)-[cytochrome b5] + O2 + 2 H(+) = (9Z)-hexadecenoyl-CoA + 2 Fe(III)-[cytochrome b5] + 2 H2O. Stearoyl-CoA desaturase that utilizes O(2) and electrons from reduced cytochrome b5 to introduce the first double bond into saturated fatty acyl-CoA substrates. Catalyzes the insertion of a cis double bond at the delta-9 position into fatty acyl-CoA substrates including palmitoyl-CoA and stearoyl-CoA. Gives rise to a mixture of 16:1 and 18:1 unsaturated fatty acids. Plays an important role in lipid biosynthesis. Plays an important role in regulating the expression of genes that are involved in lipogenesis and in regulating mitochondrial fatty acid oxidation. Plays an important role in body energy homeostasis. Contributes to the biosynthesis of membrane phospholipids, cholesterol esters and triglycerides. This is Stearoyl-CoA desaturase (SCD) from Capra hircus (Goat).